Reading from the N-terminus, the 251-residue chain is GTP cyclohydrolase 1 type 2 homolog (251 aa).

The a divalent metal cation site is built by histidine 62, histidine 63, aspartate 103, histidine 215, and glutamate 219.

This sequence belongs to the GTP cyclohydrolase I type 2/NIF3 family. As to quaternary structure, homohexamer.

This Mycoplasmopsis pulmonis (strain UAB CTIP) (Mycoplasma pulmonis) protein is GTP cyclohydrolase 1 type 2 homolog.